Reading from the N-terminus, the 236-residue chain is Lipoprotein signal peptidase (236 aa).

4 helical membrane-spanning segments follow: residues Phe-8 to Phe-28, Trp-44 to Thr-64, Val-68 to Leu-88, and Leu-98 to Phe-118. Catalysis depends on residues Asp-141 and Asp-174. The chain crosses the membrane as a helical span at residues Cys-166–Leu-186.

It belongs to the peptidase A8 family.

It is found in the cell inner membrane. It carries out the reaction Release of signal peptides from bacterial membrane prolipoproteins. Hydrolyzes -Xaa-Yaa-Zaa-|-(S,diacylglyceryl)Cys-, in which Xaa is hydrophobic (preferably Leu), and Yaa (Ala or Ser) and Zaa (Gly or Ala) have small, neutral side chains.. Its pathway is protein modification; lipoprotein biosynthesis (signal peptide cleavage). This protein specifically catalyzes the removal of signal peptides from prolipoproteins. This is Lipoprotein signal peptidase from Amoebophilus asiaticus (strain 5a2).